Reading from the N-terminus, the 244-residue chain is Sugar fermentation stimulation protein homolog (244 aa).

It belongs to the SfsA family.

The chain is Sugar fermentation stimulation protein homolog from Dinoroseobacter shibae (strain DSM 16493 / NCIMB 14021 / DFL 12).